A 189-amino-acid polypeptide reads, in one-letter code: Protein Rex (189 aa).

Over residues 1–16 (MPKTRRRPRRSQRKRP) the composition is skewed to basic residues. Residues 1–27 (MPKTRRRPRRSQRKRPPTPWPTSQGLD) are disordered. The Nuclear localization signal, and RNA-binding (RxRE) motif lies at 2 to 18 (PKTRRRPRRSQRKRPPT). The segment at 56-70 (RPAYIVTPYWPPVQS) is homomultimerization. Ser70 carries the phosphoserine; by host modification. The interval 73–189 (SPGTPSMDAL…PPSPGPSCPT (117 aa)) is disordered. A compositionally biased stretch (low complexity) spans 80 to 94 (DALSAQLYSSLSLDS). The Nuclear export signal motif lies at 82–93 (LSAQLYSSLSLD). The segment at 123–131 (PSSRPCANT) is homomultimerization. Positions 143–164 (LGSTSQPCLFQTPDSGPKTCTP) are enriched in polar residues. Thr174 is modified (phosphothreonine; by host). Residue Ser177 is modified to Phosphoserine; by host. Positions 178–189 (FPPPSPGPSCPT) are enriched in pro residues.

It belongs to the deltaretrovirus Rex protein family. As to quaternary structure, homomultimer. Multimeric assembly is essential for activity and involves XPO1. Binds to human XPO1 and KPNB1. Interacts (via N-terminal nuclear localization signal) with human NPM1.

It is found in the host nucleus. Its subcellular location is the host nucleolus. It localises to the host cytoplasm. Rex escorts unspliced gag-pro-pol and singly spliced env mRNAs out of the nucleus of infected cells. These mRNAs carry a recognition sequence called Rex responsive element (RxRE or XRE) located at the 3' region of the long terminal repeat (LTR). This function is essential since most HTLV proteins are translated from unspliced or partially spliced pre-mRNAs that cannot exit the nucleus by the pathway used by fully processed cellular mRNAs. Rex itself is translated from a fully spliced mRNA that probably readily exits the nucleus. Rex's nuclear localization signal (NLS) binds directly to KPNB1/importin beta-1 without previous binding to KPNA1/importin alpha-1. KPNB1 binds to the GDP bound form of RAN (Ran-GDP) and targets Rex to the nucleus. In the nucleus, the conversion from Ran-GDP to Ran-GTP dissociates Rex from KPNB1 and allows Rex's binding to the RRE in viral pre-mRNAs. Rex multimerizes on the RRE via cooperative assembly. This multimerization is critical for its full biological activity, since it may shield the viral RNA from being spliced or down-regulated, and probably exposes Rex's nuclear export signal (NES) to the surface. Rex can then form a complex with XPO1/CRM1, RANBP3 and Ran-GTP, leading to nuclear export of the complex. Conversion from Ran-GTP to Ran-GDP mediates dissociation of the Rex/RRE/XPO1/RANBP3/RAN complex, so that Rex can return to the nucleus for a subsequent round of export. The chain is Protein Rex from Human T-cell leukemia virus 1 (strain Japan ATK-1 subtype A) (HTLV-1).